The chain runs to 193 residues: Phosphoheptose isomerase (193 aa).

One can recognise an SIS domain in the interval 37 to 193 (LAASFKADGK…QLIEKEMASV (157 aa)). Position 52–54 (52–54 (NGG)) interacts with substrate. Zn(2+) is bound by residues His-61 and Glu-65. Substrate is bound by residues Glu-65, 93–94 (ND), 119–121 (STS), Ser-124, and Gln-172. Gln-172 and His-180 together coordinate Zn(2+).

The protein belongs to the SIS family. GmhA subfamily. As to quaternary structure, homotetramer. Requires Zn(2+) as cofactor.

It localises to the cytoplasm. The catalysed reaction is 2 D-sedoheptulose 7-phosphate = D-glycero-alpha-D-manno-heptose 7-phosphate + D-glycero-beta-D-manno-heptose 7-phosphate. It participates in carbohydrate biosynthesis; D-glycero-D-manno-heptose 7-phosphate biosynthesis; D-glycero-alpha-D-manno-heptose 7-phosphate and D-glycero-beta-D-manno-heptose 7-phosphate from sedoheptulose 7-phosphate: step 1/1. Its function is as follows. Catalyzes the isomerization of sedoheptulose 7-phosphate in D-glycero-D-manno-heptose 7-phosphate. The chain is Phosphoheptose isomerase from Edwardsiella ictaluri (strain 93-146).